A 409-amino-acid chain; its full sequence is AP-1-like transcription factor YAP2 (409 aa).

2 short sequence motifs (bipartite nuclear localization signal) span residues M17–N24 and S47–R54. Positions D26–K64 are disordered. Residues S43–Y106 enclose the bZIP domain. The interval K46–K69 is basic motif. Residues L71 to L99 are leucine-zipper. The tract at residues Q127–T156 is disordered. The interval C356 to C387 is c-CRD. A Nuclear export signal motif is present at residues L372–S379.

The protein belongs to the bZIP family. YAP subfamily. In terms of assembly, homodimer; disulfide-linked, upon oxidation. Interacts in the nucleus with the nuclear export protein CRM1. Interacts with RCK1. Depending on the oxidative stress inducing agent, CAD1/YAP2 can undergo two distinct conformational changes, both through oxidation of cysteine residues, and both masking the nuclear export signal, thus abolishing nuclear export by CRM1/exportin 1. Peroxide stress induces the formation of possible intramolecular disulfide bonds as well as intermolcular disulfide within a homodimer. Cadmium may bind directly to specific cysteine residues (Cys-391 and either Cys-356 or Cys-387) in the c-CRD.

Its subcellular location is the cytoplasm. The protein resides in the nucleus. Transcription activator involved in oxidative stress response and cadmium resistance. Regulates the transcription of genes overrepresented for the function of stabilizing proteins including the inducible Hsp90-family protein HSP82. Preferentially binds to promoters with the core binding site 5'-TTA[CG]TAA-3'. Activity of the transcription factor is controlled through oxidation of specific cysteine residues resulting in the alteration of its subcellular location. Activation by alkyl hydroperoxides or cadmium induces nuclear accumulation and as a result CAD1/YAP2 transcriptional activity. The polypeptide is AP-1-like transcription factor YAP2 (Saccharomyces cerevisiae (strain ATCC 204508 / S288c) (Baker's yeast)).